The following is a 193-amino-acid chain: MTTEFYATPAFPVSKALQWTPPEQLELTPTQADWLLYEGSLTERLKQIGQQFSVKLLGQQLLAPNTEEKQRLKGKDQAVIREVLLYCNEKPWVFARSLFSPSAENANTLNLQQLGNQSLGESLFARSDLYCGDIEVAKVALEHPVARLNQQWFGINQRLLSRRRIFSTGGEQLLVSEVFLQPSPLYSSPNNRS.

The substrate site is built by Arg-81, Leu-119, and Glu-177.

This sequence belongs to the UbiC family.

It is found in the cytoplasm. It catalyses the reaction chorismate = 4-hydroxybenzoate + pyruvate. Its pathway is cofactor biosynthesis; ubiquinone biosynthesis. Functionally, removes the pyruvyl group from chorismate, with concomitant aromatization of the ring, to provide 4-hydroxybenzoate (4HB) for the ubiquinone pathway. In Idiomarina loihiensis (strain ATCC BAA-735 / DSM 15497 / L2-TR), this protein is Probable chorismate pyruvate-lyase.